A 308-amino-acid polypeptide reads, in one-letter code: Mycothiol acetyltransferase (308 aa).

N-acetyltransferase domains lie at 16-152 and 165-308; these read ETLA…RPLA and VTVR…RTES. E47 serves as a coordination point for 1D-myo-inositol 2-(L-cysteinylamino)-2-deoxy-alpha-D-glucopyranoside. Position 91–93 (91–93) interacts with acetyl-CoA; that stretch reads LVV. 1D-myo-inositol 2-(L-cysteinylamino)-2-deoxy-alpha-D-glucopyranoside is bound by residues E192, K231, and E240. Acetyl-CoA-binding positions include 244-246 and 251-257; these read LGV and QGGGLGK. A 1D-myo-inositol 2-(L-cysteinylamino)-2-deoxy-alpha-D-glucopyranoside-binding site is contributed by Y278.

This sequence belongs to the acetyltransferase family. MshD subfamily. As to quaternary structure, monomer.

The catalysed reaction is 1D-myo-inositol 2-(L-cysteinylamino)-2-deoxy-alpha-D-glucopyranoside + acetyl-CoA = mycothiol + CoA + H(+). Functionally, catalyzes the transfer of acetyl from acetyl-CoA to desacetylmycothiol (Cys-GlcN-Ins) to form mycothiol. The polypeptide is Mycothiol acetyltransferase (Streptomyces avermitilis (strain ATCC 31267 / DSM 46492 / JCM 5070 / NBRC 14893 / NCIMB 12804 / NRRL 8165 / MA-4680)).